We begin with the raw amino-acid sequence, 249 residues long: Coproheme decarboxylase (249 aa).

Fe-coproporphyrin III-binding positions include R131, 145–149 (YPMDK), H172, Q185, and S223. Y145 is a catalytic residue.

The protein belongs to the ChdC family. Type 1 subfamily. Requires Fe-coproporphyrin III as cofactor.

It carries out the reaction Fe-coproporphyrin III + 2 H2O2 + 2 H(+) = heme b + 2 CO2 + 4 H2O. The enzyme catalyses Fe-coproporphyrin III + H2O2 + H(+) = harderoheme III + CO2 + 2 H2O. The catalysed reaction is harderoheme III + H2O2 + H(+) = heme b + CO2 + 2 H2O. Its pathway is porphyrin-containing compound metabolism; protoheme biosynthesis. In terms of biological role, involved in coproporphyrin-dependent heme b biosynthesis. Catalyzes the decarboxylation of Fe-coproporphyrin III (coproheme) to heme b (protoheme IX), the last step of the pathway. The reaction occurs in a stepwise manner with a three-propionate intermediate. This Halalkalibacterium halodurans (strain ATCC BAA-125 / DSM 18197 / FERM 7344 / JCM 9153 / C-125) (Bacillus halodurans) protein is Coproheme decarboxylase.